The primary structure comprises 637 residues: Chaperone protein HtpG (637 aa).

Residues 1 to 345 (MSQQETHGFQ…SNDLPLNVSR (345 aa)) are a; substrate-binding. The b stretch occupies residues 346-562 (EILQDNHITK…EGEMSSQMIK (217 aa)). A c region spans residues 563–637 (LMQAAGQPVP…MNQMLLANLK (75 aa)).

It belongs to the heat shock protein 90 family. Homodimer.

The protein resides in the cytoplasm. Molecular chaperone. Has ATPase activity. The sequence is that of Chaperone protein HtpG from Shewanella sp. (strain MR-4).